The following is a 191-amino-acid chain: MASKYRGYYHDEASSAAGGGGGGGGGDGYRREKQVRKKRLTAQKRKEIKEAFDLFDTDGSGTIDPKELNVAMRALGFEMTPEQIHQMIAEVDKDGSGTIDFDEFVHMMTDKMGERDAREELNKAFKIIDKDNNGKISDVDIQRLAIETGEPFTLDEVREMIEAADENGDGEVDHEEFLKMMKRIGFGAGFF.

The tract at residues 1 to 41 (MASKYRGYYHDEASSAAGGGGGGGGGDGYRREKQVRKKRLT) is disordered. Gly residues predominate over residues 17–27 (AGGGGGGGGGD). EF-hand domains lie at 43 to 78 (QKRK…LGFE), 79 to 114 (MTPE…KMGE), 116 to 151 (DARE…TGEP), and 152 to 187 (FTLD…IGFG). Residues D56, D58, S60, T62, E67, D92, D94, S96, T98, E103, D129, D131, N133, K135, D140, D165, N167, D169, E171, and E176 each coordinate Ca(2+).

Potential calcium sensor. This chain is Probable calcium-binding protein CML8 (CML8), found in Oryza sativa subsp. japonica (Rice).